A 197-amino-acid chain; its full sequence is Imidazoleglycerol-phosphate dehydratase (197 aa).

Belongs to the imidazoleglycerol-phosphate dehydratase family.

The protein localises to the cytoplasm. The enzyme catalyses D-erythro-1-(imidazol-4-yl)glycerol 3-phosphate = 3-(imidazol-4-yl)-2-oxopropyl phosphate + H2O. The protein operates within amino-acid biosynthesis; L-histidine biosynthesis; L-histidine from 5-phospho-alpha-D-ribose 1-diphosphate: step 6/9. The polypeptide is Imidazoleglycerol-phosphate dehydratase (Rhodopseudomonas palustris (strain HaA2)).